The sequence spans 285 residues: Nucleotide-binding protein HI_1146 (285 aa).

8–15 (GRSGAGKS) contacts ATP. 56-59 (DIRN) provides a ligand contact to GTP.

The protein belongs to the RapZ-like family.

Displays ATPase and GTPase activities. In Haemophilus influenzae (strain ATCC 51907 / DSM 11121 / KW20 / Rd), this protein is Nucleotide-binding protein HI_1146.